A 323-amino-acid chain; its full sequence is Ankyrin repeat and SOCS box protein 11 (323 aa).

ANK repeat units lie at residues 64–93, 97–126, 130–159, 162–191, 195–224, and 227–256; these read ADRS…NVNL, NRVS…HVNG, HGAT…KAQF, HLAS…NIDH, QLGT…SVDH, and WLDT…NLKR. The 50-residue stretch at 274 to 323 folds into the SOCS box domain; it reads VEQALLLCEGPPALSQLCRLCVRKCLGRACHQAIHKLHLPEPLERFLLYQ.

The protein belongs to the ankyrin SOCS box (ASB) family. As to quaternary structure, substrate-recognition component of the ECS(ASB11) complex, composed of ASB11, CUL5, ELOB, ELOC and RNF7/RBX2.

Its subcellular location is the endoplasmic reticulum. It functions in the pathway protein modification; protein ubiquitination. Its function is as follows. Substrate-recognition component of a cullin-5-RING E3 ubiquitin-protein ligase complex (ECS complex, also named CRL5 complex), which mediates the ubiquitination and subsequent proteasomal degradation of target proteins, such as BIK, DIRAS2 and RPN1. The ECS(ASB11) complex acts as a regulator of the endoplasmic reticulum unfolded protein response by mediating ubiquitination and degradation of BIK. This chain is Ankyrin repeat and SOCS box protein 11 (ASB11), found in Pongo abelii (Sumatran orangutan).